The following is a 37-amino-acid chain: Large ribosomal subunit protein bL36 (37 aa).

It belongs to the bacterial ribosomal protein bL36 family.

This chain is Large ribosomal subunit protein bL36, found in Desulfotalea psychrophila (strain LSv54 / DSM 12343).